A 248-amino-acid chain; its full sequence is Short-chain dehydrogenase/reductase iacG (248 aa).

I14, N35, K41, D58, R120, and V187 together coordinate NADP(+).

Belongs to the short-chain dehydrogenases/reductases (SDR) family.

The protein operates within secondary metabolite biosynthesis. Functionally, short-chain dehydrogenase/reductase; part of the gene cluster that mediates the biosynthesis of iso-A82775C, a enylepoxycyclohexane and biosynthetic precursor of the chloropestolide anticancer natural products. Within the cluster, the prenyltransferase iacE prenylates siccayne to generate pestalodiol E, using dimethylallyl diphosphate (DMAPP) as cosubstrate. The probable oxidoreductase iacF is then involved in the epoxidation of pestalodiol F to pestalodiol F, which is further converted to pestalofone A by the short-chain dehydrogenase/reductase iacG. Iso-A82775C is subsequently generated from pestalofone A by the short-chain dehydrogenase/reductase iacC. Iso-A82775C is further condensed with maldoxin via a Diels-Alder reaction to produce the anticancer natural products chloropestolides A to E. The polypeptide is Short-chain dehydrogenase/reductase iacG (Pestalotiopsis fici (strain W106-1 / CGMCC3.15140)).